The sequence spans 452 residues: tRNA(Ile)-lysidine synthase (452 aa).

Residue 27–32 (SGGIDS) coordinates ATP.

This sequence belongs to the tRNA(Ile)-lysidine synthase family.

The protein resides in the cytoplasm. It carries out the reaction cytidine(34) in tRNA(Ile2) + L-lysine + ATP = lysidine(34) in tRNA(Ile2) + AMP + diphosphate + H(+). Ligates lysine onto the cytidine present at position 34 of the AUA codon-specific tRNA(Ile) that contains the anticodon CAU, in an ATP-dependent manner. Cytidine is converted to lysidine, thus changing the amino acid specificity of the tRNA from methionine to isoleucine. This chain is tRNA(Ile)-lysidine synthase, found in Persephonella marina (strain DSM 14350 / EX-H1).